The primary structure comprises 239 residues: Large ribosomal subunit protein uL1 (239 aa).

It belongs to the universal ribosomal protein uL1 family. In terms of assembly, part of the 50S ribosomal subunit.

In terms of biological role, binds directly to 23S rRNA. The L1 stalk is quite mobile in the ribosome, and is involved in E site tRNA release. Functionally, protein L1 is also a translational repressor protein, it controls the translation of the L11 operon by binding to its mRNA. The chain is Large ribosomal subunit protein uL1 from Rickettsia akari (strain Hartford).